A 664-amino-acid polypeptide reads, in one-letter code: DNA mismatch repair protein MutL (664 aa).

It belongs to the DNA mismatch repair MutL/HexB family.

In terms of biological role, this protein is involved in the repair of mismatches in DNA. It is required for dam-dependent methyl-directed DNA mismatch repair. May act as a 'molecular matchmaker', a protein that promotes the formation of a stable complex between two or more DNA-binding proteins in an ATP-dependent manner without itself being part of a final effector complex. This Clostridium beijerinckii (strain ATCC 51743 / NCIMB 8052) (Clostridium acetobutylicum) protein is DNA mismatch repair protein MutL.